The following is a 468-amino-acid chain: PE family protein PE3 (468 aa).

Positions 1-92 (MSYVIAAPEM…AGAAYAQAEA (92 aa)) constitute a PE domain. Residues 154–375 (PVAQYTPEQW…DLRVLVDLGY (222 aa)) form the PE-PPE domain.

The protein belongs to the mycobacterial PE family.

It localises to the secreted. The protein localises to the cell wall. In terms of biological role, plays significant roles in mycobacterial persistence during infection and modulates host immune response. In Mycobacterium tuberculosis (strain ATCC 25618 / H37Rv), this protein is PE family protein PE3.